The following is a 76-amino-acid chain: Cytochrome c oxidase subunit 6C-1 (76 aa).

The Mitochondrial matrix portion of the chain corresponds to 2–10 (SLAKPAMRG). A helical membrane pass occupies residues 11-51 (LLGKRLRFHLPIAFTLSLVAALGFKYGVTEPRKQAYADFYK). At 52-76 (QYDAVKDFNAMREAGIFESVRPSGE) the chain is on the mitochondrial intermembrane side.

This sequence belongs to the cytochrome c oxidase subunit 6c family. Component of the cytochrome c oxidase (complex IV, CIV), a multisubunit enzyme composed of 14 subunits. The complex is composed of a catalytic core of 3 subunits MT-CO1, MT-CO2 and MT-CO3, encoded in the mitochondrial DNA, and 11 supernumerary subunits COX4I, COX5A, COX5B, COX6A, COX6B, COX6C, COX7A, COX7B, COX7C, COX8 and NDUFA4, which are encoded in the nuclear genome. The complex exists as a monomer or a dimer and forms supercomplexes (SCs) in the inner mitochondrial membrane with NADH-ubiquinone oxidoreductase (complex I, CI) and ubiquinol-cytochrome c oxidoreductase (cytochrome b-c1 complex, complex III, CIII), resulting in different assemblies (supercomplex SCI(1)III(2)IV(1) and megacomplex MCI(2)III(2)IV(2)).

It localises to the mitochondrion inner membrane. Its pathway is energy metabolism; oxidative phosphorylation. Functionally, component of the cytochrome c oxidase, the last enzyme in the mitochondrial electron transport chain which drives oxidative phosphorylation. The respiratory chain contains 3 multisubunit complexes succinate dehydrogenase (complex II, CII), ubiquinol-cytochrome c oxidoreductase (cytochrome b-c1 complex, complex III, CIII) and cytochrome c oxidase (complex IV, CIV), that cooperate to transfer electrons derived from NADH and succinate to molecular oxygen, creating an electrochemical gradient over the inner membrane that drives transmembrane transport and the ATP synthase. Cytochrome c oxidase is the component of the respiratory chain that catalyzes the reduction of oxygen to water. Electrons originating from reduced cytochrome c in the intermembrane space (IMS) are transferred via the dinuclear copper A center (CU(A)) of subunit 2 and heme A of subunit 1 to the active site in subunit 1, a binuclear center (BNC) formed by heme A3 and copper B (CU(B)). The BNC reduces molecular oxygen to 2 water molecules using 4 electrons from cytochrome c in the IMS and 4 protons from the mitochondrial matrix. This is Cytochrome c oxidase subunit 6C-1 from Thunnus obesus (Bigeye tuna).